The sequence spans 222 residues: Type II restriction enzyme MjaI (222 aa).

It catalyses the reaction Endonucleolytic cleavage of DNA to give specific double-stranded fragments with terminal 5'-phosphates.. In terms of biological role, a P subtype restriction enzyme that recognizes the double-stranded sequence 5'-CTAG-3'; the cleavage site is unknown. This Methanocaldococcus jannaschii (strain ATCC 43067 / DSM 2661 / JAL-1 / JCM 10045 / NBRC 100440) (Methanococcus jannaschii) protein is Type II restriction enzyme MjaI (mjaIR).